Here is a 249-residue protein sequence, read N- to C-terminus: ATP synthase subunit a (249 aa).

6 helical membrane passes run 29–49 (ASLFMVATVAAASGFLYFATS), 84–104 (FFPFVFSLFMFVLTANLLGMF), 114–134 (IIVTFALACLVIGTVIVYGFY), 140–160 (FFGIFAPSGVPKALLPLVASI), 193–213 (FVASMGALGALGVGGAVLPLI), and 216–236 (VAMTALEFLVAFLQAYVFAVL).

This sequence belongs to the ATPase A chain family. F-type ATPases have 2 components, CF(1) - the catalytic core - and CF(0) - the membrane proton channel. CF(1) has five subunits: alpha(3), beta(3), gamma(1), delta(1), epsilon(1). CF(0) has three main subunits: a(1), b(2) and c(9-12). The alpha and beta chains form an alternating ring which encloses part of the gamma chain. CF(1) is attached to CF(0) by a central stalk formed by the gamma and epsilon chains, while a peripheral stalk is formed by the delta and b chains.

Its subcellular location is the cell inner membrane. Key component of the proton channel; it plays a direct role in the translocation of protons across the membrane. In Agrobacterium fabrum (strain C58 / ATCC 33970) (Agrobacterium tumefaciens (strain C58)), this protein is ATP synthase subunit a.